A 250-amino-acid chain; its full sequence is Type-1Ab cytolytic delta-endotoxin (250 aa).

The protein belongs to the cyt1/cyt2 endotoxin family. In terms of processing, active after proteolytic processing.

Its function is as follows. Kills the larvae of dipteran insects by making pores in the epithelial cell membrane of the insect midgut. This is Type-1Ab cytolytic delta-endotoxin (cyt1Ab1) from Bacillus thuringiensis subsp. medellin.